A 173-amino-acid chain; its full sequence is Zinc finger matrin-type protein 5 (173 aa).

A C3H1-type zinc finger spans residues 51–79; it reads ERSKEVCRKFVQTGQCVFGTSCRFSHMSE. The tract at residues 83–111 is disordered; the sequence is KMLEQKIDDEKRQKEDPDQDGSSERSVDE.

As to quaternary structure, component of the U11/U12 snRNPs that are part of the U12-type spliceosome.

The protein resides in the nucleus. In Danio rerio (Zebrafish), this protein is Zinc finger matrin-type protein 5 (zmat5).